The chain runs to 24 residues: uncharacterized protein (24 aa).

This is an uncharacterized protein from Saccharomyces cerevisiae (strain ATCC 204508 / S288c) (Baker's yeast).